Here is a 48-residue protein sequence, read N- to C-terminus: U-reduvitoxin-Pr5a (48 aa).

Residues M1–G19 form the signal peptide. 3 disulfides stabilise this stretch: C20–C34, C27–C39, and C33–C44.

The protein belongs to the venom Ptu1-like knottin family. In terms of tissue distribution, expressed by the venom gland.

It is found in the secreted. Binds reversibly and blocks P/Q-type voltage-gated calcium channels (Cav). This is U-reduvitoxin-Pr5a from Platymeris rhadamanthus (Red spot assassin bug).